A 1137-amino-acid polypeptide reads, in one-letter code: Ribonucleoside-diphosphate reductase large subunit (1137 aa).

Residues 1–32 (MASRPAASSPVEARAPVGGQEAGGPSAATQGE) are disordered. An RIP homotypic interaction motif (RHIM) motif is present at residues 64–84 (SYRISDNNFVQCGSNCTMIID). Disordered regions lie at residues 124–159 (GGTP…FTLG) and 173–315 (AVFG…YPVP). Residues 131–141 (AGTSTGTQTAD) show a composition bias toward polar residues. Acidic residues predominate over residues 196 to 206 (SDSDDSEDTDS). Over residues 281 to 290 (AGAGLAADPA) the composition is skewed to low complexity. Basic and acidic residues predominate over residues 291 to 304 (VARDDAEGLSDPRP). Residues threonine 566, 581 to 582 (SC), glycine 612, 791 to 795 (NLCTE), and 968 to 972 (PTAAS) each bind substrate. Cysteines 582 and 808 form a disulfide. The Proton acceptor role is filled by asparagine 791. The active-site Cysteine radical intermediate is cysteine 793. The active-site Proton acceptor is glutamate 795.

This sequence belongs to the ribonucleoside diphosphate reductase large chain family. Heterotetramer composed of a homodimer of the large subunit (R1) and a homodimer of the small subunit (R2). Larger multisubunit protein complex are also active, composed of (R1)n(R2)n. Self-assembles (via RIP homotypic interaction motif/RHIM) into homomeric fibrillar amyloid structures. Interacts (via RHIM) with human RIPK1 (via RHIM). Interacts (via RHIM) with human RIPK3 (via RHIM); the interaction leads to heteromeric amyloid assemblies. Interacts (via RHIM) with human ZBP1 (via RHIM); the interaction leads to heteromeric amyloid assemblies. Interacts (via C-terminus) with host CASP8.

The enzyme catalyses a 2'-deoxyribonucleoside 5'-diphosphate + [thioredoxin]-disulfide + H2O = a ribonucleoside 5'-diphosphate + [thioredoxin]-dithiol. In terms of biological role, ribonucleoside-diphosphate reductase holoenzyme that provides the precursors necessary for viral DNA synthesis. Allows virus growth in non-dividing cells, as well as reactivation from latency in infected hosts. Catalyzes the biosynthesis of deoxyribonucleotides from the corresponding ribonucleotides. Prevents host necroptosis by targeting host RIPK1 and RIPK3, thereby hampering the formation of necroptotic RIPK1-RIPK3 complexes. Forms hetero-amyloid structures with host proteins RIPK3 or ZBP1 which may prevent RIPK3- and ZBP1-mediated necroptosis. In addition, inhibits extrinsic apoptosis by targeting host CASP8. This Human herpesvirus 1 (strain 17) (HHV-1) protein is Ribonucleoside-diphosphate reductase large subunit.